The following is a 594-amino-acid chain: ATP-dependent zinc metalloprotease FtsH 1 (594 aa).

Over 1–2 (MR) the chain is Cytoplasmic. Residues 3–23 (WWAGAALLLAALLFGRPAAAM) form a helical membrane-spanning segment. The Extracellular segment spans residues 24 to 92 (EAQPVAYSEF…RVEFVRPADP (69 aa)). The helical transmembrane segment at 93–113 (IAFRTLLRFIPPLLILGAILW) threads the bilayer. Residues 114-594 (FTRRTAGGSG…ANSRGDEGNQ (481 aa)) lie on the Cytoplasmic side of the membrane. 186–193 (GPPGTGKT) contacts ATP. H408 serves as a coordination point for Zn(2+). Residue E409 is part of the active site. Positions 412 and 485 each coordinate Zn(2+).

It in the central section; belongs to the AAA ATPase family. This sequence in the C-terminal section; belongs to the peptidase M41 family. Homohexamer. The cofactor is Zn(2+).

The protein resides in the cell membrane. In terms of biological role, acts as a processive, ATP-dependent zinc metallopeptidase for both cytoplasmic and membrane proteins. Plays a role in the quality control of integral membrane proteins. In Symbiobacterium thermophilum (strain DSM 24528 / JCM 14929 / IAM 14863 / T), this protein is ATP-dependent zinc metalloprotease FtsH 1.